A 128-amino-acid chain; its full sequence is Large ribosomal subunit protein mL55 (128 aa).

A mitochondrion-targeting transit peptide spans M1–A33. S85 carries the post-translational modification Phosphoserine.

The protein belongs to the mitochondrion-specific ribosomal protein mL55 family. Component of the mitochondrial large ribosomal subunit (mt-LSU). Mature mammalian 55S mitochondrial ribosomes consist of a small (28S) and a large (39S) subunit. The 28S small subunit contains a 12S ribosomal RNA (12S mt-rRNA) and 30 different proteins. The 39S large subunit contains a 16S rRNA (16S mt-rRNA), a copy of mitochondrial valine transfer RNA (mt-tRNA(Val)), which plays an integral structural role, and 52 different proteins.

Its subcellular location is the mitochondrion. The protein is Large ribosomal subunit protein mL55 (MRPL55) of Homo sapiens (Human).